We begin with the raw amino-acid sequence, 199 residues long: dITP/XTP pyrophosphatase (199 aa).

Position 7-12 (7-12 (TTNLHK)) interacts with substrate. 2 residues coordinate Mg(2+): glutamate 41 and aspartate 70. The active-site Proton acceptor is aspartate 70. Residues serine 71, 154 to 157 (FGYD), lysine 177, and 182 to 183 (HR) contribute to the substrate site.

Belongs to the HAM1 NTPase family. Homodimer. Mg(2+) is required as a cofactor.

It catalyses the reaction XTP + H2O = XMP + diphosphate + H(+). The enzyme catalyses dITP + H2O = dIMP + diphosphate + H(+). It carries out the reaction ITP + H2O = IMP + diphosphate + H(+). Its function is as follows. Pyrophosphatase that catalyzes the hydrolysis of nucleoside triphosphates to their monophosphate derivatives, with a high preference for the non-canonical purine nucleotides XTP (xanthosine triphosphate), dITP (deoxyinosine triphosphate) and ITP. Seems to function as a house-cleaning enzyme that removes non-canonical purine nucleotides from the nucleotide pool, thus preventing their incorporation into DNA/RNA and avoiding chromosomal lesions. This chain is dITP/XTP pyrophosphatase, found in Protochlamydia amoebophila (strain UWE25).